The primary structure comprises 375 residues: MFEISRLLHQPITMASPNRNNYSYQGIESYDSGRSRQNSDAMDIHVITAQEPPREPPDNNDPYDGHGGPAGTSHYSKPPNRWLFYEENGRTYHGYRRGVYPLPCDEQEQDRLDIFHKLFTVARMSESLIYAPHPPNGRFLDLGCGTGIWAIDVAHKYPNAFVAGVDLAPIQPPNHPDNCEFYAPFDFEAPWTLGENSWDLIHLQMGCGSVLGWQNLYKRILRHLQPGAWFEQVEIDFEPRCDDRSLNGLALREWYQYLKQATQDTMRPIAHSSRDTIRHLEEAGFTQIDHQMVGLPLNPWHRDEHEQKVARWYNLAISESIETLSLAPFSRIFHWDLDRIRQITAEVKSQAFNKEIHAYNILHIYQARKPGGPSL.

The span at 15 to 26 (ASPNRNNYSYQG) shows a compositional bias: polar residues. Disordered regions lie at residues 15–37 (ASPN…RSRQ) and 50–75 (QEPP…TSHY).

Belongs to the methyltransferase superfamily. LaeA methyltransferase family. In terms of assembly, component of the heterotrimeric velvet complex composed of laeA, veA and velB; VeA acting as a bridging protein between laeA and velB.

Its subcellular location is the nucleus. The catalysed reaction is L-methionyl-[protein] + S-adenosyl-L-methionine = S-methyl-L-methionyl-[protein] + S-adenosyl-L-homocysteine. Its function is as follows. Methyltransferase that performs automethylation. No other methyl-accepting substrate has been identified yet. Component of the velvet transcription factor complex that acts as a global regulator for secondary metabolite gene expression. Controls the expression of the citric acid, demethylkotanin, orlandin, asperrubrol, tensidol B, atromentin and JBIR8 gene clusters. Also represses the expression of genes related to the production of BMS-192548 and aspernigrin A. The protein is Secondary metabolism regulator laeA of Aspergillus niger (strain ATCC 1015 / CBS 113.46 / FGSC A1144 / LSHB Ac4 / NCTC 3858a / NRRL 328 / USDA 3528.7).